Consider the following 118-residue polypeptide: Protein Rev (118 aa).

Phosphoserine; by host CK2 occurs at positions 5 and 8. Residues 18–28 are homomultimerization; sequence LIKFLYQSSSD. A disordered region spans residues 23–52; sequence YQSSSDPPPNPGGTRQARRNRRRRWRERQR. A Nuclear localization signal and RNA-binding (RRE) motif is present at residues 36–52; that stretch reads TRQARRNRRRRWRERQR. Positions 38-49 are enriched in basic residues; sequence QARRNRRRRWRE. The Nuclear export signal and binding to XPO1 signature appears at 75-86; that stretch reads LQLPPLERLTLD. The segment at 92 to 118 is disordered; that stretch reads GTSGTQGVGSPQILVESPTVLESGTKE. Ser-94 and Ser-101 each carry phosphoserine; by host.

This sequence belongs to the HIV-1 REV protein family. In terms of assembly, homomultimer; when bound to the RRE. Multimeric assembly is essential for activity and may involve XPO1. Binds to human KPNB1, XPO1, TNPO1, RANBP5 and IPO7. Interacts with the viral Integrase. Interacts with human KHDRBS1. Interacts with human NAP1; this interaction decreases Rev multimerization and stimulates its activity. Interacts with human DEAD-box helicases DDX3 and DDX24; these interactions may serve for viral RNA export to the cytoplasm and packaging, respectively. Interacts with human PSIP1; this interaction may inhibit HIV-1 DNA integration by promoting dissociation of the Integrase-LEDGF/p75 complex. Post-translationally, asymmetrically arginine dimethylated at one site by host PRMT6. Methylation impairs the RNA-binding activity and export of viral RNA from the nucleus to the cytoplasm. Phosphorylated by protein kinase CK2. Presence of, and maybe binding to the N-terminus of the regulatory beta subunit of CK2 is necessary for CK2-mediated Rev's phosphorylation.

It localises to the host nucleus. The protein resides in the host nucleolus. It is found in the host cytoplasm. Escorts unspliced or incompletely spliced viral pre-mRNAs (late transcripts) out of the nucleus of infected cells. These pre-mRNAs carry a recognition sequence called Rev responsive element (RRE) located in the env gene, that is not present in fully spliced viral mRNAs (early transcripts). This function is essential since most viral proteins are translated from unspliced or partially spliced pre-mRNAs which cannot exit the nucleus by the pathway used by fully processed cellular mRNAs. Rev itself is translated from a fully spliced mRNA that readily exits the nucleus. Rev's nuclear localization signal (NLS) binds directly to KPNB1/Importin beta-1 without previous binding to KPNA1/Importin alpha-1. KPNB1 binds to the GDP bound form of RAN (Ran-GDP) and targets Rev to the nucleus. In the nucleus, the conversion from Ran-GDP to Ran-GTP dissociates Rev from KPNB1 and allows Rev's binding to the RRE in viral pre-mRNAs. Rev multimerization on the RRE via cooperative assembly exposes its nuclear export signal (NES) to the surface. Rev can then form a complex with XPO1/CRM1 and Ran-GTP, leading to nuclear export of the complex. Conversion from Ran-GTP to Ran-GDP mediates dissociation of the Rev/RRE/XPO1/RAN complex, so that Rev can return to the nucleus for a subsequent round of export. Beside KPNB1, also seems to interact with TNPO1/Transportin-1, RANBP5/IPO5 and IPO7/RANBP7 for nuclear import. The nucleoporin-like HRB/RIP is an essential cofactor that probably indirectly interacts with Rev to release HIV RNAs from the perinuclear region to the cytoplasm. In Human immunodeficiency virus type 1 group M subtype B (isolate LW123) (HIV-1), this protein is Protein Rev.